Here is a 270-residue protein sequence, read N- to C-terminus: 5'-nucleotidase SurE (270 aa).

4 residues coordinate a divalent metal cation: Asp-8, Asp-9, Ser-40, and Asn-98.

Belongs to the SurE nucleotidase family. A divalent metal cation is required as a cofactor.

The protein localises to the cytoplasm. The enzyme catalyses a ribonucleoside 5'-phosphate + H2O = a ribonucleoside + phosphate. Functionally, nucleotidase that shows phosphatase activity on nucleoside 5'-monophosphates. This Cyanothece sp. (strain PCC 7425 / ATCC 29141) protein is 5'-nucleotidase SurE.